The following is a 319-amino-acid chain: N-acetyllactosaminide alpha-1,3-galactosyltransferase-like 1 (319 aa).

Residues 1-6 are Cytoplasmic-facing; the sequence is MQYKKE. The chain crosses the membrane as a helical; Signal-anchor for type II membrane protein span at residues 7–26; the sequence is ALLLMLFAVLLALTQRFSYS. The Lumenal portion of the chain corresponds to 27 to 319; sequence RTKDHLQKMY…IKHIKIAWKP (293 aa). 2 N-linked (GlcNAc...) asparagine glycosylation sites follow: N89 and N101. Residues 97-102, 188-190, and 210-213 each bind substrate; these read FATGNF, AVN, and HAWW. The active-site Nucleophile is the E278.

This sequence belongs to the glycosyltransferase 6 family. It depends on Mn(2+) as a cofactor.

The protein localises to the golgi apparatus. It localises to the golgi stack membrane. It carries out the reaction a beta-D-galactosyl-(1-&gt;4)-N-acetyl-beta-D-glucosaminyl derivative + UDP-alpha-D-galactose = an alpha-D-galactosyl-(1-&gt;3)-beta-D-galactosyl-(1-&gt;4)-N-acetyl-beta-D-glucosaminyl derivative + UDP + H(+). It functions in the pathway protein modification; protein glycosylation. Synthesizes the galactose-alpha(1,3)-galactose group by catalyzing the transfer of a galactose residue, with an alpha-1,3 linkage, on terminal lactosaminide (Gal-beta-1,4-GlcNAc-R) disaccharide borne by a glycoprotein or a glycolipid. This chain is N-acetyllactosaminide alpha-1,3-galactosyltransferase-like 1 (Ggta1l1), found in Mus musculus (Mouse).